Reading from the N-terminus, the 209-residue chain is RNA chaperone ProQ (209 aa).

Residues 101-155 form a disordered region; that stretch reads LAESKAKVQARRKEQAQKAREEGKAKAKPAANKKPQQPRRTNKPKVQKPTKPVET. The segment covering 111 to 125 has biased composition (basic and acidic residues); that stretch reads RRKEQAQKAREEGKA. Over residues 136 to 148 the composition is skewed to basic residues; the sequence is QQPRRTNKPKVQK.

It belongs to the ProQ family.

The protein resides in the cytoplasm. Functionally, RNA chaperone with significant RNA binding, RNA strand exchange and RNA duplexing activities. The protein is RNA chaperone ProQ of Vibrio parahaemolyticus serotype O3:K6 (strain RIMD 2210633).